The primary structure comprises 189 residues: Peptidyl-tRNA hydrolase (189 aa).

TRNA is bound at residue Y14. H19 acts as the Proton acceptor in catalysis. Residues F64, N66, and N112 each contribute to the tRNA site.

The protein belongs to the PTH family. In terms of assembly, monomer.

The protein resides in the cytoplasm. It catalyses the reaction an N-acyl-L-alpha-aminoacyl-tRNA + H2O = an N-acyl-L-amino acid + a tRNA + H(+). Its function is as follows. Hydrolyzes ribosome-free peptidyl-tRNAs (with 1 or more amino acids incorporated), which drop off the ribosome during protein synthesis, or as a result of ribosome stalling. Catalyzes the release of premature peptidyl moieties from peptidyl-tRNA molecules trapped in stalled 50S ribosomal subunits, and thus maintains levels of free tRNAs and 50S ribosomes. The polypeptide is Peptidyl-tRNA hydrolase (Zymomonas mobilis subsp. mobilis (strain ATCC 31821 / ZM4 / CP4)).